A 136-amino-acid polypeptide reads, in one-letter code: MAKFIKSGKVAIVVRGRYAGKKVVIVKPHDEGTKSHPFPHAIVAGIERAPLKVTKKMDAKKVTKRTKVKPFVKLVNYNHLMPTRYSLDVESFKSAVTSEALEEPSQREEAKKVVKKAFEEKHQAGKNKWFFQKLHF.

It belongs to the eukaryotic ribosomal protein eL27 family.

This is Large ribosomal subunit protein eL27 (RPL27) from Candida albicans (Yeast).